Reading from the N-terminus, the 749-residue chain is Transcription factor RFX3 (749 aa).

Residues 183–258 (HLQWLLDNYE…YHYYGIRVKP (76 aa)) constitute a DNA-binding region (RFX-type winged-helix).

The protein belongs to the RFX family.

It is found in the nucleus. In terms of biological role, transcription factor required for ciliogenesis and islet cell differentiation during endocrine pancreas development. The chain is Transcription factor RFX3 (rfx3) from Xenopus tropicalis (Western clawed frog).